Here is a 776-residue protein sequence, read N- to C-terminus: Serine/threonine-protein kinase-like protein CCR2 (776 aa).

The N-terminal stretch at 1–22 is a signal peptide; that stretch reads MQPNSHIFVIITISSLIITVSA. Over 23 to 432 the chain is Extracellular; that stretch reads YGSTGTIAAA…QKEQREVRRL (410 aa). N-linked (GlcNAc...) asparagine glycosylation is found at asparagine 59, asparagine 92, asparagine 154, asparagine 162, asparagine 205, asparagine 278, asparagine 287, and asparagine 350. The stretch at 341 to 396 is one TNFR-Cys repeat; it reads NCGDGWFAFNASILKESELTSLCSFHNLNICLRCGISCLEGYFPSSTCNPNADRVC. 3 disulfides stabilise this stretch: cysteine 342–cysteine 371, cysteine 374–cysteine 388, and cysteine 378–cysteine 396. The N-linked (GlcNAc...) asparagine glycan is linked to asparagine 404. The helical transmembrane segment at 433-453 threads the bilayer; the sequence is VIIIGCSVLGFLVMLIGLSFI. Residues 454–776 lie on the Cytoplasmic side of the membrane; the sequence is PKMTKGSKRD…DLIVKSGLTF (323 aa). Positions 519-776 constitute a Protein kinase domain; sequence FKEFNELGRG…DLIVKSGLTF (258 aa). Residues 525–533 and lysine 547 contribute to the ATP site; that span reads LGRGSFGFV. The Proton acceptor role is filled by aspartate 644.

Belongs to the protein kinase superfamily. Ser/Thr protein kinase family. Homodimer. In terms of tissue distribution, expressed in roots, leaves, shoot apical meristems (SAM), and floral buds.

It is found in the membrane. The enzyme catalyses L-seryl-[protein] + ATP = O-phospho-L-seryl-[protein] + ADP + H(+). It catalyses the reaction L-threonyl-[protein] + ATP = O-phospho-L-threonyl-[protein] + ADP + H(+). Functionally, serine/threonine-protein kinase with low activity. The polypeptide is Serine/threonine-protein kinase-like protein CCR2 (CCR2) (Arabidopsis thaliana (Mouse-ear cress)).